Here is a 318-residue protein sequence, read N- to C-terminus: Mitochondrial coenzyme A transporter SLC25A42 (318 aa).

Solcar repeat units lie at residues 31-117, 129-214, and 224-312; these read RQVL…YKRI, LPPW…LKSL, and PYPF…MQIL. 6 helical membrane passes run 33–53, 89–109, 135–155, 186–206, 230–250, and 293–313; these read VLSS…AVAP, LWRG…IQFS, LLAG…LDLV, LYFG…LSFF, MVFG…LDVV, and LKGP…QILL.

It belongs to the mitochondrial carrier (TC 2.A.29) family. In terms of tissue distribution, widely expressed. Highly expressed in adipose, followed by hypothalamus and brain coronal sections containing corpus callosum, fornix, thalamus, hypothalamus, optic chiasm, pons, midbrain, and cerebellum.

It is found in the mitochondrion inner membrane. It catalyses the reaction ADP(out) + CoA(in) = ADP(in) + CoA(out). The catalysed reaction is 3'-dephospho-CoA(in) + ADP(out) = 3'-dephospho-CoA(out) + ADP(in). The enzyme catalyses adenosine 3',5'-bisphosphate(in) + ADP(out) = adenosine 3',5'-bisphosphate(out) + ADP(in). It carries out the reaction AMP(in) + ADP(out) = AMP(out) + ADP(in). It catalyses the reaction dADP(in) + ADP(out) = dADP(out) + ADP(in). The catalysed reaction is ADP(in) + ATP(out) = ADP(out) + ATP(in). In terms of biological role, mitochondrial carrier mediating the transport of coenzyme A (CoA) in mitochondria in exchange for intramitochondrial (deoxy)adenine nucleotides and adenosine 3',5'-diphosphate. The sequence is that of Mitochondrial coenzyme A transporter SLC25A42 (Slc25a42) from Rattus norvegicus (Rat).